The sequence spans 108 residues: UPF0235 protein Rpal_0418 (108 aa).

The protein belongs to the UPF0235 family.

The protein is UPF0235 protein Rpal_0418 of Rhodopseudomonas palustris (strain TIE-1).